Reading from the N-terminus, the 351-residue chain is Tropomodulin-2 (351 aa).

Serine 25 is modified (phosphoserine).

It belongs to the tropomodulin family. In terms of assembly, binds to the N-terminus of tropomyosin and to actin. Binds to TMBr3 as well as to other low molecular mass tropomyosins (TM5a or TM5), but not to high molecular mass tropomyosins (TM2 or TMBr1). In terms of tissue distribution, neuronal-tissue specific.

Its subcellular location is the cytoplasm. The protein resides in the cytoskeleton. Its function is as follows. Blocks the elongation and depolymerization of the actin filaments at the pointed end. The Tmod/TM complex contributes to the formation of the short actin protofilament, which in turn defines the geometry of the membrane skeleton. This Rattus norvegicus (Rat) protein is Tropomodulin-2 (Tmod2).